The primary structure comprises 129 residues: uncharacterized protein (129 aa).

The tract at residues 52-94 (NGDEESQDDWLNDLLKSDGDGGKAGPVDPSHPMETTTTDHSSQ) is disordered. Over residues 53–62 (GDEESQDDWL) the composition is skewed to acidic residues. The segment covering 84 to 94 (METTTTDHSSQ) has biased composition (polar residues).

This is an uncharacterized protein from Caenorhabditis elegans.